The primary structure comprises 145 residues: Arginine repressor (145 aa).

Belongs to the ArgR family.

Its subcellular location is the cytoplasm. The protein operates within amino-acid biosynthesis; L-arginine biosynthesis [regulation]. Its function is as follows. Regulates arginine biosynthesis genes. The sequence is that of Arginine repressor from Streptococcus pyogenes serotype M6 (strain ATCC BAA-946 / MGAS10394).